A 290-amino-acid polypeptide reads, in one-letter code: Ribosome-inactivating protein bryodin I (290 aa).

The N-terminal stretch at 1-23 is a signal peptide; sequence MIKLLVLWLLILTIFLKSPTVEG. Residues Glu-183 and Glu-212 contribute to the active site. Asn-214 and Asn-250 each carry an N-linked (GlcNAc...) asparagine glycan. A propeptide spans 271–290 (removed in mature form); sequence AIGEDISMTLIGFEHGLYGI.

The protein belongs to the ribosome-inactivating protein family. Type 1 RIP subfamily. Post-translationally, appears to undergo proteolytic cleavage in the C-terminal to produce a shorter protein.

The catalysed reaction is Endohydrolysis of the N-glycosidic bond at one specific adenosine on the 28S rRNA.. Functionally, ribosome-inactivating protein of type 1, inhibits protein synthesis in animal cells. The polypeptide is Ribosome-inactivating protein bryodin I (Bryonia dioica (Red bryony)).